We begin with the raw amino-acid sequence, 269 residues long: UPF0524 protein C3orf70 homolog A (269 aa).

2 disordered regions span residues 139–203 (VQRP…DSGI) and 215–249 (DEDSCVDDDDEEEEDDELSTDGNSSPGSFWDQDEC). Residues 141-150 (RPPPPTPNPT) are compositionally biased toward pro residues. The span at 151 to 164 (HQPQTAAPQPVPQR) shows a compositional bias: low complexity. Residues 179-191 (QAKEKISAPKMDH) are compositionally biased toward basic and acidic residues. Acidic residues predominate over residues 215-233 (DEDSCVDDDDEEEEDDELS).

Belongs to the UPF0524 family.

Its function is as follows. Plays a role in neuronal and neurobehavioral development. Required for normal expression of neuronal markers elavl3 and eno2 and neurobehaviors related to circadian rhythm and changes in light-dark conditions. The sequence is that of UPF0524 protein C3orf70 homolog A from Danio rerio (Zebrafish).